The chain runs to 276 residues: MAVKKFKPYTPSRRFMTVADFSEITKTEPEKSLVKPLKKTGGRNNQGRITVRFRGGGHKRLYRIIDFKRWDKVGIPAKVAAIEYDPNRSARIALLHYVDGEKRYIIAPDGLQVGQQVVAGPDAPIQVGNALPLRFIPVGTVVHAVELEPKKGAKLARAAGTSAQIQGREGDYVILRLPSGELRKVHGECYATVGAVGNADHKNIVLGKAGRSRWLGRRPHVRGAAMNPVDHPHGGGEGRAPRGRPPASPWGWQTKGLKTRKRRKPSSRFIIARRKK.

The tract at residues 223–276 (GAAMNPVDHPHGGGEGRAPRGRPPASPWGWQTKGLKTRKRRKPSSRFIIARRKK) is disordered. Residues 230–240 (DHPHGGGEGRA) are compositionally biased toward basic and acidic residues. The segment covering 257–276 (LKTRKRRKPSSRFIIARRKK) has biased composition (basic residues).

The protein belongs to the universal ribosomal protein uL2 family. In terms of assembly, part of the 50S ribosomal subunit. Forms a bridge to the 30S subunit in the 70S ribosome.

One of the primary rRNA binding proteins. Required for association of the 30S and 50S subunits to form the 70S ribosome, for tRNA binding and peptide bond formation. It has been suggested to have peptidyltransferase activity; this is somewhat controversial. Makes several contacts with the 16S rRNA in the 70S ribosome. This is Large ribosomal subunit protein uL2 from Thermus thermophilus (strain ATCC BAA-163 / DSM 7039 / HB27).